The primary structure comprises 230 residues: MSPISNFARIALACTVAALLGGCVIAGDVRPYPAMAPIQPIMPPQAEPTAGAIYAAGPTLQLYSDRRARDVGDLLTITLLENTTAQTSANTATNKESNLSLGTPSILGAPVTLGGKDILSATAKGARDFTGKGNSAQSNRLQGSVTVTVIQRLPNGNLVVQGQKNLRLNQGDELVQVQGIVRPGDISQDNTIPSSRVAEARIVYGGRGPVAQSNAMGWLSRFFNSGLTPF.

The N-terminal stretch at 1–22 is a signal peptide; that stretch reads MSPISNFARIALACTVAALLGG. The N-palmitoyl cysteine moiety is linked to residue Cys-23. Residue Cys-23 is the site of S-diacylglycerol cysteine attachment.

The protein belongs to the FlgH family. The basal body constitutes a major portion of the flagellar organelle and consists of four rings (L,P,S, and M) mounted on a central rod.

It localises to the cell outer membrane. The protein localises to the bacterial flagellum basal body. In terms of biological role, assembles around the rod to form the L-ring and probably protects the motor/basal body from shearing forces during rotation. This Stenotrophomonas maltophilia (strain K279a) protein is Flagellar L-ring protein.